The following is a 101-amino-acid chain: Small ribosomal subunit protein uS14 (101 aa).

Belongs to the universal ribosomal protein uS14 family. In terms of assembly, part of the 30S ribosomal subunit. Contacts proteins S3 and S10.

Functionally, binds 16S rRNA, required for the assembly of 30S particles and may also be responsible for determining the conformation of the 16S rRNA at the A site. The protein is Small ribosomal subunit protein uS14 of Neorickettsia sennetsu (strain ATCC VR-367 / Miyayama) (Ehrlichia sennetsu).